A 24-amino-acid chain; its full sequence is Ascaphin-7 (24 aa).

Expressed by the skin glands.

Its subcellular location is the secreted. In terms of biological role, antimicrobial peptide that shows higher potency against Gram-negative bacteria than against Gram-positive bacteria. Has a very week hemolytic activity. In Ascaphus truei (Coastal tailed frog), this protein is Ascaphin-7.